A 191-amino-acid chain; its full sequence is Probable calcium-binding protein CML8 (191 aa).

The segment at 1-41 (MASKYRGYYHDEASSAAGGGGGGGGGDGYRREKQVRKKRLT) is disordered. The segment covering 17–27 (AGGGGGGGGGD) has biased composition (gly residues). 4 EF-hand domains span residues 43–78 (QKRKEIKEAFDLFDTDGSGTIDPKELNVAMRALGFE), 79–114 (MTPEQIHQMIAEVDKDGSGTIDFDEFVHMMTDKMGE), 116–151 (DAREELNKAFKIIDKDNNGKISDVDIQRLAIETGEP), and 152–187 (FTLDEVREMIEAADENGDGEVDHEEFLKMMKRIGFG). The Ca(2+) site is built by D56, D58, S60, T62, E67, D92, D94, S96, T98, E103, D129, D131, N133, K135, D140, D165, N167, D169, E171, and E176.

Its function is as follows. Potential calcium sensor. The sequence is that of Probable calcium-binding protein CML8 (CML8) from Oryza sativa subsp. japonica (Rice).